Reading from the N-terminus, the 335-residue chain is Holliday junction branch migration complex subunit RuvB (335 aa).

The tract at residues 4–184 (ADRIISGQAK…FGIVQRLEFY (181 aa)) is large ATPase domain (RuvB-L). Residues isoleucine 23, arginine 24, glycine 65, lysine 68, threonine 69, threonine 70, 131 to 133 (EDY), arginine 174, tyrosine 184, and arginine 221 each bind ATP. Mg(2+) is bound at residue threonine 69. The small ATPAse domain (RuvB-S) stretch occupies residues 185 to 255 (SVEDLTSIVA…VAKQALSMLD (71 aa)). A head domain (RuvB-H) region spans residues 258-335 (DAGFDYLDRK…RHFGLQKLSD (78 aa)). Residues arginine 294, arginine 313, and arginine 318 each coordinate DNA.

Belongs to the RuvB family. As to quaternary structure, homohexamer. Forms an RuvA(8)-RuvB(12)-Holliday junction (HJ) complex. HJ DNA is sandwiched between 2 RuvA tetramers; dsDNA enters through RuvA and exits via RuvB. An RuvB hexamer assembles on each DNA strand where it exits the tetramer. Each RuvB hexamer is contacted by two RuvA subunits (via domain III) on 2 adjacent RuvB subunits; this complex drives branch migration. In the full resolvosome a probable DNA-RuvA(4)-RuvB(12)-RuvC(2) complex forms which resolves the HJ.

It localises to the cytoplasm. It catalyses the reaction ATP + H2O = ADP + phosphate + H(+). Its function is as follows. The RuvA-RuvB-RuvC complex processes Holliday junction (HJ) DNA during genetic recombination and DNA repair, while the RuvA-RuvB complex plays an important role in the rescue of blocked DNA replication forks via replication fork reversal (RFR). RuvA specifically binds to HJ cruciform DNA, conferring on it an open structure. The RuvB hexamer acts as an ATP-dependent pump, pulling dsDNA into and through the RuvAB complex. RuvB forms 2 homohexamers on either side of HJ DNA bound by 1 or 2 RuvA tetramers; 4 subunits per hexamer contact DNA at a time. Coordinated motions by a converter formed by DNA-disengaged RuvB subunits stimulates ATP hydrolysis and nucleotide exchange. Immobilization of the converter enables RuvB to convert the ATP-contained energy into a lever motion, pulling 2 nucleotides of DNA out of the RuvA tetramer per ATP hydrolyzed, thus driving DNA branch migration. The RuvB motors rotate together with the DNA substrate, which together with the progressing nucleotide cycle form the mechanistic basis for DNA recombination by continuous HJ branch migration. Branch migration allows RuvC to scan DNA until it finds its consensus sequence, where it cleaves and resolves cruciform DNA. The sequence is that of Holliday junction branch migration complex subunit RuvB from Haemophilus influenzae (strain 86-028NP).